The following is a 304-amino-acid chain: Endonuclease III-like protein 1 (304 aa).

A mitochondrion-targeting transit peptide spans 1–22 (MTALSARMLTRSRSLGPGAGPR). A disordered region spans residues 1-72 (MTALSARMLT…SDSEKGEGAE (72 aa)). Positions 23–42 (GCREEPGPLRRREAAAEARK) are enriched in basic and acidic residues. A Bipartite nuclear localization signal motif is present at residues 28-52 (PGPLRRREAAAEARKSHSPVKRPRK). The segment covering 43 to 55 (SHSPVKRPRKAQR) has biased composition (basic residues). S63 and S65 each carry phosphoserine. In terms of domain architecture, HhH spans 191-215 (HYGGDIPASVAELVALPGVGPKMAH). Residue K212 is the Nucleophile; for N-glycosylase activity of the active site. 4 residues coordinate [4Fe-4S] cluster: C282, C289, C292, and C298.

It belongs to the Nth/MutY family. As to quaternary structure, interacts with YBX1. Interacts with ERCC5/XPG; the interaction stimulates NTHL1 activity and NTHL1 binding to its DNA substrate. [4Fe-4S] cluster is required as a cofactor. In terms of processing, ubiquitinated by TRIM26; leading to proteasomal degradation. As to expression, widely expressed with highest levels in heart and lowest levels in lung and liver.

The protein localises to the nucleus. Its subcellular location is the mitochondrion. It catalyses the reaction 2'-deoxyribonucleotide-(2'-deoxyribose 5'-phosphate)-2'-deoxyribonucleotide-DNA = a 3'-end 2'-deoxyribonucleotide-(2,3-dehydro-2,3-deoxyribose 5'-phosphate)-DNA + a 5'-end 5'-phospho-2'-deoxyribonucleoside-DNA + H(+). With respect to regulation, APE1 displaces NTHL1 from the N-glycosylase-generated AP site in DNA, thereby increasing the turnover of the DNA N-glycosylase activity. AP lyase activity is stimulated by YBX1. ERCC5/XPG stimulates NTHL1 activity and NTHL1 binding to its DNA substrate. Functionally, bifunctional DNA N-glycosylase with associated apurinic/apyrimidinic (AP) lyase function that catalyzes the first step in base excision repair (BER), the primary repair pathway for the repair of oxidative DNA damage. The DNA N-glycosylase activity releases the damaged DNA base from DNA by cleaving the N-glycosidic bond, leaving an AP site. The AP-lyase activity cleaves the phosphodiester bond 3' to the AP site by a beta-elimination. Primarily recognizes and repairs oxidative base damage of pyrimidines. Also has 8-oxo-7,8-dihydroguanine (8-oxoG) DNA glycosylase activity. Acts preferentially on DNA damage opposite guanine residues in DNA. Is able to process lesions in nucleosomes without requiring or inducing nucleosome disruption. This is Endonuclease III-like protein 1 from Homo sapiens (Human).